The following is a 197-amino-acid chain: MSFTVHIVDDEESLRDSLGFLFASRGIATRTWAAGADLLAEWPLADCGCLILDVRMEGMSGPQLLDALQARPEGLVPPVIFLTGHADVPLAVQSLKAGAFDFVEKPFNDNHIVDIALSAIAAHEGRLAEAQAREAVAARRASLSAREAEVMALMLEGLMNKQIAERLGIAMRTVEVHRSRVLAKMGARNIADLARMT.

The Response regulatory domain occupies T4 to I120. Position 53 is a 4-aspartylphosphate (D53). The segment at A128 to A135 is inter-domain linker. One can recognise an HTH luxR-type domain in the interval V136–T197. Residues N160–S179 constitute a DNA-binding region (H-T-H motif).

In terms of processing, phosphorylated by DctS.

The protein resides in the cytoplasm. Its function is as follows. Member of the two-component regulatory system DctS/DctR involved in the transport of C4-dicarboxylates. DctR functions as a transcriptional repressor of genes for C4-dicarboxylate transport. This is C4-dicarboxylate transport transcriptional regulatory protein DctR (dctR) from Rhodobacter capsulatus (Rhodopseudomonas capsulata).